The chain runs to 155 residues: SsrA-binding protein (155 aa).

It belongs to the SmpB family.

It localises to the cytoplasm. In terms of biological role, required for rescue of stalled ribosomes mediated by trans-translation. Binds to transfer-messenger RNA (tmRNA), required for stable association of tmRNA with ribosomes. tmRNA and SmpB together mimic tRNA shape, replacing the anticodon stem-loop with SmpB. tmRNA is encoded by the ssrA gene; the 2 termini fold to resemble tRNA(Ala) and it encodes a 'tag peptide', a short internal open reading frame. During trans-translation Ala-aminoacylated tmRNA acts like a tRNA, entering the A-site of stalled ribosomes, displacing the stalled mRNA. The ribosome then switches to translate the ORF on the tmRNA; the nascent peptide is terminated with the 'tag peptide' encoded by the tmRNA and targeted for degradation. The ribosome is freed to recommence translation, which seems to be the essential function of trans-translation. In Helicobacter hepaticus (strain ATCC 51449 / 3B1), this protein is SsrA-binding protein.